The sequence spans 190 residues: MKLTNLALAFTLFGASAVAFAHADHDHKKADNSSVEKLVVQVQQLDPVKGNKDVGTVEITESAYGLVFTPHLHGLAQGLHGFHIHQNPSCEPKEKDGKLVAGLGAGGHWDPKETKQHGYPWSDNAHLGDLPALFVEHDGSATNPVLAPRLKKLDEVKGHSLMIHEGGDNHSDHPAPLGGGGPRMACGVIK.

Positions 1–23 (MKLTNLALAFTLFGASAVAFAHA) are cleaved as a signal peptide. Cu cation-binding residues include His83, His85, and His108. Residues Cys90 and Cys186 are joined by a disulfide bond. His108, His117, His126, and Asp129 together coordinate Zn(2+). Residues 162–181 (MIHEGGDNHSDHPAPLGGGG) are disordered. A Cu cation-binding site is contributed by His164.

Belongs to the Cu-Zn superoxide dismutase family. In terms of assembly, homodimer. Cu cation is required as a cofactor. The cofactor is Zn(2+).

Its subcellular location is the periplasm. The catalysed reaction is 2 superoxide + 2 H(+) = H2O2 + O2. Its function is as follows. Destroys radicals which are normally produced within the cells and which are toxic to biological systems. The polypeptide is Superoxide dismutase [Cu-Zn] (sodC) (Actinobacillus pleuropneumoniae (Haemophilus pleuropneumoniae)).